A 230-amino-acid chain; its full sequence is Somatolactin (230 aa).

An N-terminal signal peptide occupies residues 1–25 (MHTKVLQQGLWALLLWPHLFTVSVP). 3 cysteine pairs are disulfide-bonded: C28–C38, C88–C204, and C221–C229. N144 carries an N-linked (GlcNAc...) asparagine glycan.

The protein belongs to the somatotropin/prolactin family.

It localises to the secreted. In terms of biological role, selectively regulates proliferation and morphogenesis of neural-crest derived pigment cells. The protein is Somatolactin of Oryzias latipes (Japanese rice fish).